We begin with the raw amino-acid sequence, 209 residues long: SelT-like protein (209 aa).

The first 22 residues, Met1–Asn22, serve as a signal peptide directing secretion. Cys64 and Cys67 are joined by a disulfide.

It belongs to the SelWTH family. SELT subfamily.

In Arabidopsis thaliana (Mouse-ear cress), this protein is SelT-like protein.